A 719-amino-acid chain; its full sequence is Pesticidal crystal protein Cry1Id (719 aa).

It belongs to the delta endotoxin family.

Promotes colloidosmotic lysis by binding to the midgut epithelial cells of many lepidopteran larvae. Active on Plutella xylostella and on Bombyx mori. The polypeptide is Pesticidal crystal protein Cry1Id (cry1Id) (Bacillus thuringiensis).